The sequence spans 72 residues: MAKDGVIEVEGQVVEALPNAMFRVELENKHIVLATISGKMRKNYIRILPQDRVVLEMSPYDLNRGRITYRYK.

Residues 1–72 form the S1-like domain; that stretch reads MAKDGVIEVE…NRGRITYRYK (72 aa).

It belongs to the IF-1 family. In terms of assembly, component of the 30S ribosomal translation pre-initiation complex which assembles on the 30S ribosome in the order IF-2 and IF-3, IF-1 and N-formylmethionyl-tRNA(fMet); mRNA recruitment can occur at any time during PIC assembly.

It is found in the cytoplasm. In terms of biological role, one of the essential components for the initiation of protein synthesis. Stabilizes the binding of IF-2 and IF-3 on the 30S subunit to which N-formylmethionyl-tRNA(fMet) subsequently binds. Helps modulate mRNA selection, yielding the 30S pre-initiation complex (PIC). Upon addition of the 50S ribosomal subunit IF-1, IF-2 and IF-3 are released leaving the mature 70S translation initiation complex. This Bifidobacterium adolescentis (strain ATCC 15703 / DSM 20083 / NCTC 11814 / E194a) protein is Translation initiation factor IF-1.